The primary structure comprises 178 residues: Putative RING-H2 finger protein ATL19 (178 aa).

Residues 11–31 form a helical membrane-spanning segment; sequence LISVLGLAVFIGLCILLVVLI. An RING-type; atypical zinc finger spans residues 130-172; sequence CAICLSGYVVNEECRVFPVCRHIYHALCIDAWLKNHLTCPTCR.

Belongs to the RING-type zinc finger family. ATL subfamily.

It is found in the membrane. The enzyme catalyses S-ubiquitinyl-[E2 ubiquitin-conjugating enzyme]-L-cysteine + [acceptor protein]-L-lysine = [E2 ubiquitin-conjugating enzyme]-L-cysteine + N(6)-ubiquitinyl-[acceptor protein]-L-lysine.. Its pathway is protein modification; protein ubiquitination. This is Putative RING-H2 finger protein ATL19 (ATL19) from Arabidopsis thaliana (Mouse-ear cress).